We begin with the raw amino-acid sequence, 157 residues long: 2-C-methyl-D-erythritol 2,4-cyclodiphosphate synthase (157 aa).

Positions 8 and 10 each coordinate a divalent metal cation. 4-CDP-2-C-methyl-D-erythritol 2-phosphate contacts are provided by residues 8 to 10 (DVH) and 34 to 35 (HS). Residue H42 coordinates a divalent metal cation. 4-CDP-2-C-methyl-D-erythritol 2-phosphate is bound by residues 56-58 (DIG), 132-135 (TTNE), and R142.

Belongs to the IspF family. Homotrimer. Requires a divalent metal cation as cofactor.

It carries out the reaction 4-CDP-2-C-methyl-D-erythritol 2-phosphate = 2-C-methyl-D-erythritol 2,4-cyclic diphosphate + CMP. Its pathway is isoprenoid biosynthesis; isopentenyl diphosphate biosynthesis via DXP pathway; isopentenyl diphosphate from 1-deoxy-D-xylulose 5-phosphate: step 4/6. Its function is as follows. Involved in the biosynthesis of isopentenyl diphosphate (IPP) and dimethylallyl diphosphate (DMAPP), two major building blocks of isoprenoid compounds. Catalyzes the conversion of 4-diphosphocytidyl-2-C-methyl-D-erythritol 2-phosphate (CDP-ME2P) to 2-C-methyl-D-erythritol 2,4-cyclodiphosphate (ME-CPP) with a corresponding release of cytidine 5-monophosphate (CMP). The chain is 2-C-methyl-D-erythritol 2,4-cyclodiphosphate synthase from Chlorobium phaeovibrioides (strain DSM 265 / 1930) (Prosthecochloris vibrioformis (strain DSM 265)).